Consider the following 80-residue polypeptide: RNA-binding protein Hfq (80 aa).

The Sm domain maps to 10–70 (DLFLNTVRKQ…ISTIMPGQPM (61 aa)).

It belongs to the Hfq family. As to quaternary structure, homohexamer.

Functionally, RNA chaperone that binds small regulatory RNA (sRNAs) and mRNAs to facilitate mRNA translational regulation in response to envelope stress, environmental stress and changes in metabolite concentrations. Also binds with high specificity to tRNAs. The chain is RNA-binding protein Hfq from Rhizobium rhizogenes (strain K84 / ATCC BAA-868) (Agrobacterium radiobacter).